Here is a 94-residue protein sequence, read N- to C-terminus: MRIKPLGDRVVIKRLEAEEKTKSGIVLPGSAKEKPQEAEIVAVGPGGLVDGKEVRMEVKVGDKVLFSKYSGTEVKLDGEEYTILRQNDILAIVE.

The protein belongs to the GroES chaperonin family. In terms of assembly, heptamer of 7 subunits arranged in a ring. Interacts with the chaperonin GroEL.

It is found in the cytoplasm. Together with the chaperonin GroEL, plays an essential role in assisting protein folding. The GroEL-GroES system forms a nano-cage that allows encapsulation of the non-native substrate proteins and provides a physical environment optimized to promote and accelerate protein folding. GroES binds to the apical surface of the GroEL ring, thereby capping the opening of the GroEL channel. In Clostridium novyi (strain NT), this protein is Co-chaperonin GroES.